A 202-amino-acid chain; its full sequence is Dephospho-CoA kinase (202 aa).

One can recognise a DPCK domain in the interval 5 to 202; the sequence is ILGLTGGIGS…FYLTLRGGQP (198 aa). 13 to 18 contacts ATP; that stretch reads GSGKSA.

Belongs to the CoaE family.

The protein localises to the cytoplasm. It carries out the reaction 3'-dephospho-CoA + ATP = ADP + CoA + H(+). Its pathway is cofactor biosynthesis; coenzyme A biosynthesis; CoA from (R)-pantothenate: step 5/5. Functionally, catalyzes the phosphorylation of the 3'-hydroxyl group of dephosphocoenzyme A to form coenzyme A. The polypeptide is Dephospho-CoA kinase (Stutzerimonas stutzeri (Pseudomonas stutzeri)).